The following is a 350-amino-acid chain: Biotin synthase (350 aa).

Positions 41 to 268 (NEVQISRLLS…LSRVRLSAGR (228 aa)) constitute a Radical SAM core domain. Residues Cys-56, Cys-60, and Cys-63 each contribute to the [4Fe-4S] cluster site. The [2Fe-2S] cluster site is built by Cys-100, Cys-131, Cys-191, and Arg-263.

This sequence belongs to the radical SAM superfamily. Biotin synthase family. In terms of assembly, homodimer. [4Fe-4S] cluster is required as a cofactor. It depends on [2Fe-2S] cluster as a cofactor.

The catalysed reaction is (4R,5S)-dethiobiotin + (sulfur carrier)-SH + 2 reduced [2Fe-2S]-[ferredoxin] + 2 S-adenosyl-L-methionine = (sulfur carrier)-H + biotin + 2 5'-deoxyadenosine + 2 L-methionine + 2 oxidized [2Fe-2S]-[ferredoxin]. It functions in the pathway cofactor biosynthesis; biotin biosynthesis; biotin from 7,8-diaminononanoate: step 2/2. In terms of biological role, catalyzes the conversion of dethiobiotin (DTB) to biotin by the insertion of a sulfur atom into dethiobiotin via a radical-based mechanism. This is Biotin synthase from Shewanella oneidensis (strain ATCC 700550 / JCM 31522 / CIP 106686 / LMG 19005 / NCIMB 14063 / MR-1).